A 239-amino-acid polypeptide reads, in one-letter code: Ribonuclease PH (239 aa).

Phosphate contacts are provided by residues Arg-86 and 124–126 (GTR).

This sequence belongs to the RNase PH family. As to quaternary structure, homohexameric ring arranged as a trimer of dimers.

It carries out the reaction tRNA(n+1) + phosphate = tRNA(n) + a ribonucleoside 5'-diphosphate. Functionally, phosphorolytic 3'-5' exoribonuclease that plays an important role in tRNA 3'-end maturation. Removes nucleotide residues following the 3'-CCA terminus of tRNAs; can also add nucleotides to the ends of RNA molecules by using nucleoside diphosphates as substrates, but this may not be physiologically important. Probably plays a role in initiation of 16S rRNA degradation (leading to ribosome degradation) during starvation. The polypeptide is Ribonuclease PH (Rickettsia africae (strain ESF-5)).